The primary structure comprises 30 residues: Kalata-B17 (30 aa).

Residues 1–30 (GIPCAESCVYIPCTITALLGCKCKDQVCYN) constitute a cross-link (cyclopeptide (Gly-Asn)). Cystine bridges form between cysteine 4–cysteine 21, cysteine 8–cysteine 23, and cysteine 13–cysteine 28.

This is a cyclic peptide.

Functionally, probably participates in a plant defense mechanism. This chain is Kalata-B17, found in Oldenlandia affinis.